A 319-amino-acid chain; its full sequence is ATP-dependent 6-phosphofructokinase (319 aa).

G11 serves as a coordination point for ATP. 21–25 (RAVTR) serves as a coordination point for ADP. Residues 72–73 (RY) and 102–105 (GDGS) each bind ATP. D103 provides a ligand contact to Mg(2+). Position 125–127 (125–127 (TID)) interacts with substrate. The active-site Proton acceptor is D127. ADP is bound at residue R154. Residues R162 and 169-171 (MGR) contribute to the substrate site. Residues 185-187 (GAD) and 213-215 (KDH) each bind ADP. Substrate-binding positions include E222, R243, and 249–252 (HMQR).

This sequence belongs to the phosphofructokinase type A (PFKA) family. ATP-dependent PFK group I subfamily. Prokaryotic clade 'B1' sub-subfamily. In terms of assembly, homotetramer. Requires Mg(2+) as cofactor.

It is found in the cytoplasm. It catalyses the reaction beta-D-fructose 6-phosphate + ATP = beta-D-fructose 1,6-bisphosphate + ADP + H(+). Its pathway is carbohydrate degradation; glycolysis; D-glyceraldehyde 3-phosphate and glycerone phosphate from D-glucose: step 3/4. Its activity is regulated as follows. Allosterically activated by ADP and other diphosphonucleosides, and allosterically inhibited by phosphoenolpyruvate. The binding affinities for these effectors are decreased however, and therefore the allosteric effect becomes apparent only at high effector concentrations. Its function is as follows. Catalyzes the phosphorylation of D-fructose 6-phosphate to fructose 1,6-bisphosphate by ATP, the first committing step of glycolysis. This Lactobacillus delbrueckii subsp. bulgaricus protein is ATP-dependent 6-phosphofructokinase.